Here is a 287-residue protein sequence, read N- to C-terminus: Ribosomal RNA small subunit methyltransferase A (287 aa).

Residues asparagine 28, leucine 30, glycine 55, glutamate 77, aspartate 103, and asparagine 123 each contribute to the S-adenosyl-L-methionine site.

Belongs to the class I-like SAM-binding methyltransferase superfamily. rRNA adenine N(6)-methyltransferase family. RsmA subfamily.

Its subcellular location is the cytoplasm. It carries out the reaction adenosine(1518)/adenosine(1519) in 16S rRNA + 4 S-adenosyl-L-methionine = N(6)-dimethyladenosine(1518)/N(6)-dimethyladenosine(1519) in 16S rRNA + 4 S-adenosyl-L-homocysteine + 4 H(+). Specifically dimethylates two adjacent adenosines (A1518 and A1519) in the loop of a conserved hairpin near the 3'-end of 16S rRNA in the 30S particle. May play a critical role in biogenesis of 30S subunits. This Rhodopseudomonas palustris (strain BisA53) protein is Ribosomal RNA small subunit methyltransferase A.